The chain runs to 1336 residues: Vascular endothelial growth factor receptor 1 (1336 aa).

The signal sequence occupies residues M1–G22. The Extracellular portion of the chain corresponds to Y23–E758. Ig-like C2-type domains lie at P32–E121, G151–H214, L230–H327, S335–T421, Q429–R549, P556–V655, and P661–T747. Cystine bridges form between C53–C107 and C158–C207. N-linked (GlcNAc...) asparagine glycosylation is found at N100, N164, N196, and N251. A disulfide bond links C252 and C311. N323, N417, N474, N516, N597, N625, N666, and N713 each carry an N-linked (GlcNAc...) asparagine glycan. 2 disulfide bridges follow: C454/C535 and C577/C636. A disulfide bridge links C682 with C731. The helical transmembrane segment at L759–I780 threads the bilayer. Topologically, residues R781 to A1336 are cytoplasmic. In terms of domain architecture, Protein kinase spans L827–L1158. ATP is bound by residues L833 to V841 and K861. Phosphotyrosine; by autocatalysis is present on Y914. A compositionally biased stretch (basic and acidic residues) spans K941–L957. Positions K941 to G982 are disordered. The span at S959 to S969 shows a compositional bias: low complexity. Catalysis depends on D1022, which acts as the Proton acceptor. Phosphotyrosine; by autocatalysis occurs at positions 1053, 1169, 1213, 1242, 1325, and 1331. Residues R1304–N1326 are disordered.

This sequence belongs to the protein kinase superfamily. Tyr protein kinase family. CSF-1/PDGF receptor subfamily. As to quaternary structure, interacts with VEGFA, VEGFB and PGF. Monomer in the absence of bound VEGFA, VEGFB or PGF. Homodimer in the presence of bound VEGFA, VEGFB and PGF. Can also form a heterodimer with KDR. Interacts (tyrosine phosphorylated) with CBL, CRK, GRB2, NCK1, PIK3R1, PLCG, PSEN1 and PTPN11. Probably interacts with PTPRB. Interacts with RACK1. Identified in a complex with CBL and CD2AP. Post-translationally, N-glycosylated. Ubiquitinated after VEGFA-mediated autophosphorylation, leading to proteolytic degradation. In terms of processing, autophosphorylated on tyrosine residues upon ligand binding. Autophosphorylation occurs in trans, i.e. one subunit of the dimeric receptor phosphorylates tyrosine residues on the other subunit. Phosphorylation at Tyr-1169 is important for interaction with PLCG. Phosphorylation at Tyr-1213 is important for interaction with PIK3R1, PTPN11, GRB2, and PLCG. Phosphorylation at Tyr-1331 is important for endocytosis and for interaction with CBL, NCK1 and CRK. Is probably dephosphorylated by PTPRB.

It localises to the cell membrane. Its subcellular location is the endosome. It carries out the reaction L-tyrosyl-[protein] + ATP = O-phospho-L-tyrosyl-[protein] + ADP + H(+). Its activity is regulated as follows. Present in an inactive conformation in the absence of bound ligand. Binding of VEGFA, VEGFB or PGF leads to dimerization and activation by autophosphorylation on tyrosine residues. Its function is as follows. Tyrosine-protein kinase that acts as a cell-surface receptor for VEGFA, VEGFB and PGF, and plays an essential role in the development of embryonic vasculature, the regulation of angiogenesis, cell survival, cell migration, macrophage function, chemotaxis, and cancer cell invasion. Acts as a positive regulator of postnatal retinal hyaloid vessel regression. May play an essential role as a negative regulator of embryonic angiogenesis by inhibiting excessive proliferation of endothelial cells. Can promote endothelial cell proliferation, survival and angiogenesis in adulthood. Its function in promoting cell proliferation seems to be cell-type specific. Promotes PGF-mediated proliferation of endothelial cells, and proliferation of some types of cancer cells, but does not promote proliferation of normal fibroblasts. Has very high affinity for VEGFA and relatively low protein kinase activity; may function as a negative regulator of VEGFA signaling by limiting the amount of free VEGFA and preventing its binding to KDR. Modulates KDR signaling by forming heterodimers with KDR. Ligand binding leads to the activation of several signaling cascades. Activation of PLCG leads to the production of the cellular signaling molecules diacylglycerol and inositol 1,4,5-trisphosphate and the activation of protein kinase C. Mediates phosphorylation of PIK3R1, the regulatory subunit of phosphatidylinositol 3-kinase, leading to the activation of phosphatidylinositol kinase and the downstream signaling pathway. Mediates activation of MAPK1/ERK2, MAPK3/ERK1 and the MAP kinase signaling pathway, as well as of the AKT1 signaling pathway. Phosphorylates SRC, YES1 and PLCG, and may also phosphorylate CBL. Promotes phosphorylation of AKT1 and PTK2/FAK1. The chain is Vascular endothelial growth factor receptor 1 (Flt1) from Rattus norvegicus (Rat).